We begin with the raw amino-acid sequence, 224 residues long: MDDFKLDKPTPYYLQFYNQLKKMIFNGTFKPGERINETQLAKSFGVSRSPIREAMRLLEKDGLLKADDRNGFSITSLTAKDVDEIYKIRIPLEQLAVELVIDEADEEELTILEKQLEETEKAIHNGTEDTEIIRLNQKFHELLVDFSHNRHLKNLLEHVNDLIHFCRILNYTGDHRAETILREHRRIFEEVKKKNKEAAKQHVLAHFNHDCEHLKHVLEEGKEN.

The 68-residue stretch at 10–77 (TPYYLQFYNQ…DRNGFSITSL (68 aa)) folds into the HTH gntR-type domain. A DNA-binding region (H-T-H motif) is located at residues 37–56 (ETQLAKSFGVSRSPIREAMR).

This is an uncharacterized protein from Bacillus subtilis (strain 168).